The primary structure comprises 635 residues: Sodium- and chloride-dependent transporter XTRP3B (635 aa).

Positions 1 to 38 are disordered; the sequence is MESPSAHAVSLPEDEELQPWGGAGGPGQHPGRPRSTEC. Residues 1–56 are Cytoplasmic-facing; sequence MESPSAHAVSLPEDEELQPWGGAGGPGQHPGRPRSTECAHPGVVEKVRPKWDNPLQ. The chain crosses the membrane as a helical span at residues 57-77; the sequence is FLLVCISYAVGLGNVWRFPYL. Residues 78-85 are Extracellular-facing; the sequence is CQMYGGGN. The helical transmembrane segment at 86–106 threads the bilayer; it reads FLVPYIIMLIVEGMPLLYLEL. Topologically, residues 107–127 are cytoplasmic; sequence AVGQRMRQGSIGAWRTISPYL. The chain crosses the membrane as a helical span at residues 128–148; the sequence is SGVGIASLVVSFLASVYFNVI. The Extracellular portion of the chain corresponds to 149–208; it reads NTWALWYLFHSFQDPLPWSVCPLNSNHTGYDEECEKASSTQYFWYRKTLNISPSIQENGG. N-linked (GlcNAc...) asparagine glycosylation occurs at N174. A helical transmembrane segment spans residues 209-229; sequence VQWEPALCLTLAWLMVYLCIL. The Cytoplasmic portion of the chain corresponds to 230–237; it reads RGTESTGK. Residues 238-258 traverse the membrane as a helical segment; it reads VVYFTTSLPYFVLIIYLVRGL. Topologically, residues 259–284 are extracellular; the sequence is TLHGATNGLAYMFTPKIEQLANPKAW. A helical membrane pass occupies residues 285 to 305; it reads INAATQIFFSLGLGCGGLIAF. Residues 306–319 are Cytoplasmic-facing; the sequence is ASYNEPSNDCQKHA. A helical transmembrane segment spans residues 320-340; it reads LIVSVINSTTAIFSSIVTFSI. The Extracellular segment spans residues 341–432; it reads YGFKATFNYE…EAIKNMEVSQ (92 aa). N400 carries an N-linked (GlcNAc...) asparagine glycan. Residues 433 to 453 form a helical membrane-spanning segment; sequence LWSVLYFFMLLTLGMGSMVGT. At 454–474 the chain is on the cytoplasmic side; the sequence is GTAILTPLTDSKIISSYLPKE. A helical membrane pass occupies residues 475 to 495; that stretch reads AISGLVCLLNCAIGMVFTMEA. Topologically, residues 496 to 508 are extracellular; it reads GNYWFDLFNDYTA. Residues 509–529 form a helical membrane-spanning segment; that stretch reads TLSLLLIVLVETIAVCYVYGL. The Cytoplasmic portion of the chain corresponds to 530-547; it reads KRFESDLRAMTGRTLSWY. The chain crosses the membrane as a helical span at residues 548-568; sequence WKVMWAFVSPLLIVGLFIFYL. Over 569–597 the chain is Extracellular; the sequence is SDYILTGTLQYQAWDATQGHVVTKDYPTY. A helical transmembrane segment spans residues 598–618; that stretch reads ALAVIGLLVASSTMCIPLVAL. At 619 to 635 the chain is on the cytoplasmic side; that stretch reads GTFVTRHFKIREQFSAA.

The protein belongs to the sodium:neurotransmitter symporter (SNF) (TC 2.A.22) family. SLC6A20 subfamily. As to quaternary structure, interacts with CLTRN. Detected only in kidney and lung.

The protein localises to the apical cell membrane. Functionally, does not show transporter activity with a range of tested amino acids including proline, glutamine, glutamic acid, leucine, alanine, histidine, glycine and arginine. This Mus musculus (Mouse) protein is Sodium- and chloride-dependent transporter XTRP3B (Slc6a20b).